A 404-amino-acid polypeptide reads, in one-letter code: Propionate kinase (404 aa).

This sequence belongs to the acetokinase family. PduW subfamily.

The protein resides in the cytoplasm. The enzyme catalyses propanoate + ATP = propanoyl phosphate + ADP. It participates in polyol metabolism; 1,2-propanediol degradation. In terms of biological role, works with phosphate acetyltransferase (pta) to capture exogenous propionate and regenerate propionyl-CoA during degradation of 1,2-propanediol (1,2-PD). The chain is Propionate kinase from Klebsiella pneumoniae subsp. pneumoniae (strain ATCC 700721 / MGH 78578).